The primary structure comprises 122 residues: Small ribosomal subunit protein uS13 (122 aa).

The interval 97-122 (PVRGQRTRTNARTRKGPRKTVAKKKK) is disordered. Residues 101–122 (QRTRTNARTRKGPRKTVAKKKK) are compositionally biased toward basic residues.

The protein belongs to the universal ribosomal protein uS13 family. In terms of assembly, part of the 30S ribosomal subunit. Forms a loose heterodimer with protein S19. Forms two bridges to the 50S subunit in the 70S ribosome.

In terms of biological role, located at the top of the head of the 30S subunit, it contacts several helices of the 16S rRNA. In the 70S ribosome it contacts the 23S rRNA (bridge B1a) and protein L5 of the 50S subunit (bridge B1b), connecting the 2 subunits; these bridges are implicated in subunit movement. Contacts the tRNAs in the A and P-sites. This chain is Small ribosomal subunit protein uS13, found in Caldanaerobacter subterraneus subsp. tengcongensis (strain DSM 15242 / JCM 11007 / NBRC 100824 / MB4) (Thermoanaerobacter tengcongensis).